Reading from the N-terminus, the 185-residue chain is Capsid protein (185 aa).

Residues 136–185 are disordered; sequence NAPILSTLPETTVVRRRDRGRSPRRRTPSPRRRRSQSPRRRRSQSRESQC. A compositionally biased stretch (basic residues) spans 149–178; sequence VRRRDRGRSPRRRTPSPRRRRSQSPRRRRS. 3 positions are modified to phosphoserine; by host: Ser-157, Ser-164, and Ser-172. A 1; half-length repeat occupies 157-163; sequence SPRRRTP. A 3 X 8 AA repeats of S-P-R-R-R-[PR]-S-Q region spans residues 157 to 179; it reads SPRRRTPSPRRRRSQSPRRRRSQ. The short motif at 160–177 is the Bipartite nuclear localization signal element; sequence RRTPSPRRRRSQSPRRRR. 2 tandem repeats follow at residues 164-171 and 172-179. An RNA binding region spans residues 179–185; it reads QSRESQC.

This sequence belongs to the orthohepadnavirus core antigen family. In terms of assembly, homodimerizes, then multimerizes. Interacts with cytosol exposed regions of viral L glycoprotein present in the reticulum-to-Golgi compartment. Interacts with human FLNB. Phosphorylated form interacts with host importin alpha; this interaction depends on the exposure of the NLS, which itself depends upon genome maturation and/or phosphorylation of the capsid protein. Interacts with host NUP153. Phosphorylated by host SRPK1, SRPK2, and maybe protein kinase C or GAPDH. Phosphorylation is critical for pregenomic RNA packaging. Protein kinase C phosphorylation is stimulated by HBx protein and may play a role in transport of the viral genome to the nucleus at the late step during the viral replication cycle.

The protein resides in the virion. It localises to the host cytoplasm. Its function is as follows. Self assembles to form an icosahedral capsid. Most capsids appear to be large particles with an icosahedral symmetry of T=4 and consist of 240 copies of capsid protein, though a fraction forms smaller T=3 particles consisting of 180 capsid proteins. Entering capsids are transported along microtubules to the nucleus. Phosphorylation of the capsid is thought to induce exposure of nuclear localization signal in the C-terminal portion of the capsid protein that allows binding to the nuclear pore complex via the importin (karyopherin-) alpha and beta. Capsids are imported in intact form through the nuclear pore into the nuclear basket, where it probably binds NUP153. Only capsids that contain the mature viral genome can release the viral DNA and capsid protein into the nucleoplasm. Immature capsids get stuck in the basket. Capsids encapsulate the pre-genomic RNA and the P protein. Pre-genomic RNA is reverse-transcribed into DNA while the capsid is still in the cytoplasm. The capsid can then either be directed to the nucleus, providing more genomes for transcription, or bud through the endoplasmic reticulum to provide new virions. The chain is Capsid protein from Homo sapiens (Human).